The following is a 59-amino-acid chain: Large ribosomal subunit protein uL30 (59 aa).

Belongs to the universal ribosomal protein uL30 family. As to quaternary structure, part of the 50S ribosomal subunit.

The protein is Large ribosomal subunit protein uL30 of Hydrogenobaculum sp. (strain Y04AAS1).